A 216-amino-acid polypeptide reads, in one-letter code: ATP-dependent Clp protease proteolytic subunit 3 (216 aa).

S120 acts as the Nucleophile in catalysis. H145 is an active-site residue.

Belongs to the peptidase S14 family. In terms of assembly, fourteen ClpP subunits assemble into 2 heptameric rings which stack back to back to give a disk-like structure with a central cavity, resembling the structure of eukaryotic proteasomes.

The protein resides in the cytoplasm. It catalyses the reaction Hydrolysis of proteins to small peptides in the presence of ATP and magnesium. alpha-casein is the usual test substrate. In the absence of ATP, only oligopeptides shorter than five residues are hydrolyzed (such as succinyl-Leu-Tyr-|-NHMec, and Leu-Tyr-Leu-|-Tyr-Trp, in which cleavage of the -Tyr-|-Leu- and -Tyr-|-Trp bonds also occurs).. Functionally, cleaves peptides in various proteins in a process that requires ATP hydrolysis. Has a chymotrypsin-like activity. Plays a major role in the degradation of misfolded proteins. The sequence is that of ATP-dependent Clp protease proteolytic subunit 3 from Prochlorococcus marinus (strain SARG / CCMP1375 / SS120).